Consider the following 118-residue polypeptide: MIEALLVATGGFFGAITRFAISNWFKKRNKTQFPLATFLINITGAFLLGYIIGNGVTTGWQLLLGTGFMGAFTTFSTFKLEAVQLLNRKNISTFLLYLSATYIIGILFAFLGMKLGGI.

Helical transmembrane passes span 1–21 (MIEA…RFAI), 33–53 (FPLA…YIIG), 55–75 (GVTT…FTTF), and 91–111 (ISTF…FAFL). Na(+)-binding residues include glycine 70 and threonine 73.

The protein belongs to the fluoride channel Fluc/FEX (TC 1.A.43) family.

It is found in the cell membrane. It carries out the reaction fluoride(in) = fluoride(out). With respect to regulation, na(+) is not transported, but it plays an essential structural role and its presence is essential for fluoride channel function. Fluoride-specific ion channel. Important for reducing fluoride concentration in the cell, thus reducing its toxicity. The chain is Fluoride-specific ion channel FluC 2 from Bacillus cereus (strain ATCC 14579 / DSM 31 / CCUG 7414 / JCM 2152 / NBRC 15305 / NCIMB 9373 / NCTC 2599 / NRRL B-3711).